The sequence spans 296 residues: Diaminopimelate epimerase (296 aa).

Residues Asn-17, Gln-49, and Asn-69 each contribute to the substrate site. Cys-78 (proton donor) is an active-site residue. Substrate-binding positions include 79-80 (GN), Asn-171, Asn-205, and 223-224 (ER). The active-site Proton acceptor is Cys-232. Residue 233 to 234 (GT) participates in substrate binding.

It belongs to the diaminopimelate epimerase family. In terms of assembly, homodimer.

Its subcellular location is the cytoplasm. It carries out the reaction (2S,6S)-2,6-diaminopimelate = meso-2,6-diaminopimelate. It participates in amino-acid biosynthesis; L-lysine biosynthesis via DAP pathway; DL-2,6-diaminopimelate from LL-2,6-diaminopimelate: step 1/1. Catalyzes the stereoinversion of LL-2,6-diaminopimelate (L,L-DAP) to meso-diaminopimelate (meso-DAP), a precursor of L-lysine and an essential component of the bacterial peptidoglycan. This chain is Diaminopimelate epimerase, found in Methylorubrum extorquens (strain PA1) (Methylobacterium extorquens).